The following is an 82-amino-acid chain: Small ribosomal subunit protein eS27A (82 aa).

The C4-type zinc-finger motif lies at 37-59 (CPGCLNITTVFSHAQTAVTCESC). Cys-40 bears the S-methylcysteine mark.

This sequence belongs to the eukaryotic ribosomal protein eS27 family. Component of the small ribosomal subunit (SSU). Mature yeast ribosomes consist of a small (40S) and a large (60S) subunit. The 40S small subunit contains 1 molecule of ribosomal RNA (18S rRNA) and 33 different proteins (encoded by 57 genes). The large 60S subunit contains 3 rRNA molecules (25S, 5.8S and 5S rRNA) and 46 different proteins (encoded by 81 genes). Zn(2+) is required as a cofactor. Post-translationally, the N-terminus is not modified.

It is found in the cytoplasm. In terms of biological role, component of the ribosome, a large ribonucleoprotein complex responsible for the synthesis of proteins in the cell. The small ribosomal subunit (SSU) binds messenger RNAs (mRNAs) and translates the encoded message by selecting cognate aminoacyl-transfer RNA (tRNA) molecules. The large subunit (LSU) contains the ribosomal catalytic site termed the peptidyl transferase center (PTC), which catalyzes the formation of peptide bonds, thereby polymerizing the amino acids delivered by tRNAs into a polypeptide chain. The nascent polypeptides leave the ribosome through a tunnel in the LSU and interact with protein factors that function in enzymatic processing, targeting, and the membrane insertion of nascent chains at the exit of the ribosomal tunnel. The sequence is that of Small ribosomal subunit protein eS27A from Saccharomyces cerevisiae (strain ATCC 204508 / S288c) (Baker's yeast).